The following is a 424-amino-acid chain: Exodeoxyribonuclease 7 large subunit (424 aa).

It belongs to the XseA family. As to quaternary structure, heterooligomer composed of large and small subunits.

The protein localises to the cytoplasm. The enzyme catalyses Exonucleolytic cleavage in either 5'- to 3'- or 3'- to 5'-direction to yield nucleoside 5'-phosphates.. Functionally, bidirectionally degrades single-stranded DNA into large acid-insoluble oligonucleotides, which are then degraded further into small acid-soluble oligonucleotides. The chain is Exodeoxyribonuclease 7 large subunit from Cyanothece sp. (strain PCC 7425 / ATCC 29141).